Consider the following 319-residue polypeptide: Acetyl-coenzyme A carboxylase carboxyl transferase subunit alpha (319 aa).

The CoA carboxyltransferase C-terminal domain maps to 35-296; sequence NLDEEVQRLR…KAQLLIDLAE (262 aa).

The protein belongs to the AccA family. In terms of assembly, acetyl-CoA carboxylase is a heterohexamer composed of biotin carboxyl carrier protein (AccB), biotin carboxylase (AccC) and two subunits each of ACCase subunit alpha (AccA) and ACCase subunit beta (AccD).

The protein resides in the cytoplasm. It catalyses the reaction N(6)-carboxybiotinyl-L-lysyl-[protein] + acetyl-CoA = N(6)-biotinyl-L-lysyl-[protein] + malonyl-CoA. It participates in lipid metabolism; malonyl-CoA biosynthesis; malonyl-CoA from acetyl-CoA: step 1/1. Functionally, component of the acetyl coenzyme A carboxylase (ACC) complex. First, biotin carboxylase catalyzes the carboxylation of biotin on its carrier protein (BCCP) and then the CO(2) group is transferred by the carboxyltransferase to acetyl-CoA to form malonyl-CoA. The protein is Acetyl-coenzyme A carboxylase carboxyl transferase subunit alpha of Photorhabdus laumondii subsp. laumondii (strain DSM 15139 / CIP 105565 / TT01) (Photorhabdus luminescens subsp. laumondii).